Consider the following 639-residue polypeptide: MSDRPSTPLLDNVQSPNDLKGLSDFDLKRLADELRAEMIWTVSKTGGHFGAGLGVVELTVALHSVFDTPRDKLVWDVSHQCYPHKILTGRRDQMLTIRQKDGLSGFTKRSESPFDPFGAAHSSTSISAALGFAVARDLGGDSDTGHGDAIAVIGDGAMSGGMAFEAMNNAGHLGKRLIVILNDNEMSIAPPTGALSSYLSRLYAGAPFQEFKAAAKGAVSLLPEPFQEGARRAKELLKSATVGGTLFEELGFSYVGPIDGHDMESLLSVLRTVKARADGPILIHAITKKGKGYSEHRADRGHATAKFNIATGEQVKAPSNAPSYTKVFAQSLIAEAEDDPKVVAVTAAMPDGTGLDLFAERFPSRCFDVGIAEQHGVTFAAGMAAGGLKPFAAIYSTFLQRGYDQVVHDVAIQRLPVRFAIDRAGLVGADGCTHAGSYDISYLANLPGFVVMAAADEAELRHMVRTALEIDDRPSAFRFPRGEGMGVDMPDRGTALEIGKGRMISEGNRVAILNFGTRLKEVQEAAETLSQRGITPTIADARFAKPLDEALILQLARHHEALITVEEGAVGGFGSHVAHLLAENAVFDTGIKYRSMVLPDIFIDQASPKDMYAVAGMNAEDIVAKVLTTLGVEVLSQRA.

Thiamine diphosphate-binding positions include His79 and 120-122 (AHS). Asp155 lines the Mg(2+) pocket. Thiamine diphosphate is bound by residues 156-157 (GA), Asn184, Tyr293, and Glu373. Asn184 contacts Mg(2+).

The protein belongs to the transketolase family. DXPS subfamily. As to quaternary structure, homodimer. Mg(2+) serves as cofactor. The cofactor is thiamine diphosphate.

It carries out the reaction D-glyceraldehyde 3-phosphate + pyruvate + H(+) = 1-deoxy-D-xylulose 5-phosphate + CO2. It functions in the pathway metabolic intermediate biosynthesis; 1-deoxy-D-xylulose 5-phosphate biosynthesis; 1-deoxy-D-xylulose 5-phosphate from D-glyceraldehyde 3-phosphate and pyruvate: step 1/1. In terms of biological role, catalyzes the acyloin condensation reaction between C atoms 2 and 3 of pyruvate and glyceraldehyde 3-phosphate to yield 1-deoxy-D-xylulose-5-phosphate (DXP). This Jannaschia sp. (strain CCS1) protein is 1-deoxy-D-xylulose-5-phosphate synthase 1.